The primary structure comprises 235 residues: Peptidyl-tRNA hydrolase (235 aa).

TRNA is bound at residue Y14. Residue H19 is the Proton acceptor of the active site. TRNA contacts are provided by F64, N66, and N112. A disordered region spans residues 186-235 (RTAPPRSSGGSPKTDKPAKATREPPPAAKPEATPEEETRSPLQRLVDKFR). Basic and acidic residues predominate over residues 198 to 207 (KTDKPAKATR).

Belongs to the PTH family. In terms of assembly, monomer.

The protein resides in the cytoplasm. It catalyses the reaction an N-acyl-L-alpha-aminoacyl-tRNA + H2O = an N-acyl-L-amino acid + a tRNA + H(+). Its function is as follows. Hydrolyzes ribosome-free peptidyl-tRNAs (with 1 or more amino acids incorporated), which drop off the ribosome during protein synthesis, or as a result of ribosome stalling. Catalyzes the release of premature peptidyl moieties from peptidyl-tRNA molecules trapped in stalled 50S ribosomal subunits, and thus maintains levels of free tRNAs and 50S ribosomes. The polypeptide is Peptidyl-tRNA hydrolase (Dinoroseobacter shibae (strain DSM 16493 / NCIMB 14021 / DFL 12)).